A 407-amino-acid chain; its full sequence is Argininosuccinate synthase (407 aa).

ATP is bound by residues 16 to 24 (AYSGGLDTS) and alanine 44. Residues tyrosine 96 and serine 101 each contribute to the L-citrulline site. Glycine 126 lines the ATP pocket. 3 residues coordinate L-aspartate: threonine 128, asparagine 132, and aspartate 133. Residue asparagine 132 participates in L-citrulline binding. 5 residues coordinate L-citrulline: arginine 136, serine 185, serine 194, glutamate 270, and tyrosine 282.

It belongs to the argininosuccinate synthase family. Type 1 subfamily. As to quaternary structure, homotetramer.

It is found in the cytoplasm. It carries out the reaction L-citrulline + L-aspartate + ATP = 2-(N(omega)-L-arginino)succinate + AMP + diphosphate + H(+). It functions in the pathway amino-acid biosynthesis; L-arginine biosynthesis; L-arginine from L-ornithine and carbamoyl phosphate: step 2/3. The protein is Argininosuccinate synthase of Shewanella denitrificans (strain OS217 / ATCC BAA-1090 / DSM 15013).